A 158-amino-acid polypeptide reads, in one-letter code: Protein-export protein SecB (158 aa).

This sequence belongs to the SecB family. Homotetramer, a dimer of dimers. One homotetramer interacts with 1 SecA dimer.

Its subcellular location is the cytoplasm. In terms of biological role, one of the proteins required for the normal export of preproteins out of the cell cytoplasm. It is a molecular chaperone that binds to a subset of precursor proteins, maintaining them in a translocation-competent state. It also specifically binds to its receptor SecA. In Rhodopseudomonas palustris (strain BisB5), this protein is Protein-export protein SecB.